The chain runs to 1161 residues: Cingulin (1161 aa).

The interval 1 to 403 is head; that stretch reads MSSLSADRKP…SLIHERFCGV (403 aa). Disordered stretches follow at residues 29 to 53, 79 to 309, 649 to 678, 699 to 721, 739 to 773, and 1123 to 1161; these read GGFP…SPSK, SYGV…LGRD, QSEL…KRET, SKAI…ESNL, RLHS…AASR, and QSRR…TTSC. A ZIM motif is present at residues 51-65; that stretch reads PSKYGVAVRVQGISG. Polar residues-rich tracts occupy residues 84–104 and 117–129; these read LKTQ…SPYN and PQGS…QPSS. Residues 189–203 show a composition bias toward low complexity; the sequence is NGIGSSLNGTGLNGS. A compositionally biased stretch (polar residues) spans 273-305; sequence EASSTSPTINPYAPNTSATVPKLNSTKPSSTGS. A coiled-coil region spans residues 413–1128; that stretch reads SNMKTELEQA…RKIQQSRRST (716 aa). Low complexity predominate over residues 742-751; it reads SSVPDSSSSD. Residues 755–773 show a composition bias toward basic and acidic residues; sequence EENRSLKTQLEESRRAASR. A tail region spans residues 1122 to 1161; the sequence is QQSRRSTLGSTLSSDEEDNYSDTKSITSILTDSPLQTTSC. A compositionally biased stretch (low complexity) spans 1124–1134; sequence SRRSTLGSTLS. Residues 1143 to 1161 show a composition bias toward polar residues; the sequence is DTKSITSILTDSPLQTTSC.

This sequence belongs to the cingulin family. Homodimer.

Its subcellular location is the cell junction. The protein resides in the tight junction. Its function is as follows. Probably plays a role in the formation and regulation of the tight junction (TJ) paracellular permeability barrier. Note=Localizes to the apical junction complex composed of tight and adherens junctions. This Danio rerio (Zebrafish) protein is Cingulin.